The following is a 342-amino-acid chain: Isopentenyl-diphosphate delta-isomerase (342 aa).

11 to 12 (RK) contacts substrate. FMN-binding positions include Ser-68, 69-71 (SMT), Ser-99, and Asn-127. 99 to 101 (SMR) is a binding site for substrate. Glu-163 is a Mg(2+) binding site. FMN is bound by residues Lys-194, Thr-224, and 295 to 296 (AG).

This sequence belongs to the IPP isomerase type 2 family. In terms of assembly, homooctamer. Dimer of tetramers. FMN serves as cofactor. The cofactor is NADPH. Requires Mg(2+) as cofactor.

The protein resides in the cytoplasm. The catalysed reaction is isopentenyl diphosphate = dimethylallyl diphosphate. Functionally, involved in the biosynthesis of isoprenoids. Catalyzes the 1,3-allylic rearrangement of the homoallylic substrate isopentenyl (IPP) to its allylic isomer, dimethylallyl diphosphate (DMAPP). The sequence is that of Isopentenyl-diphosphate delta-isomerase from Rickettsia prowazekii (strain Madrid E).